The chain runs to 244 residues: Probable histone-lysine N-methyltransferase set-23 (244 aa).

The 62-residue stretch at 25 to 86 folds into the Pre-SET domain; the sequence is EGCNCEAECS…SCRNRVVQCG (62 aa). Zn(2+) is bound by residues cysteine 27, cysteine 29, cysteine 33, cysteine 39, cysteine 41, cysteine 65, cysteine 69, cysteine 71, and cysteine 78. One can recognise an SET domain in the interval 89–213; sequence KKLEIFSTCE…RGEELCYDYG (125 aa). Residues 101–103, aspartate 141, tyrosine 143, arginine 170, and 173–174 each bind S-adenosyl-L-methionine; these read KGF and NH. Zn(2+) contacts are provided by cysteine 176, cysteine 225, cysteine 227, and cysteine 232. Residues 221 to 237 enclose the Post-SET domain; it reads NRKLCLCKSEKCRKYLP.

It belongs to the class V-like SAM-binding methyltransferase superfamily. Histone-lysine methyltransferase family. Suvar3-9 subfamily.

The protein localises to the nucleus. Its subcellular location is the chromosome. The catalysed reaction is L-lysyl-[histone] + S-adenosyl-L-methionine = N(6)-methyl-L-lysyl-[histone] + S-adenosyl-L-homocysteine + H(+). Probable histone methyltransferase. Required for embryonic development. The polypeptide is Probable histone-lysine N-methyltransferase set-23 (set-23) (Caenorhabditis elegans).